We begin with the raw amino-acid sequence, 1310 residues long: Vacuolating cytotoxin autotransporter (1310 aa).

Residues 1–30 (MEIQQTHRKINRPIISLALVGVLMGTELGA) form the signal peptide. Positions 339–364 (PEGGYESKTKDNPQNNPKNDAQKTEI) are disordered. Polar residues predominate over residues 350–364 (NPQNNPKNDAQKTEI). Residues 1038-1310 (KYEKPTNVWA…ASNLGMRYSF (273 aa)) enclose the Autotransporter domain.

It localises to the periplasm. It is found in the secreted. Its subcellular location is the cell surface. The protein resides in the cell outer membrane. Its function is as follows. Induces vacuolation of eukaryotic cells. Causes ulceration and gastric lesions. The protein is Vacuolating cytotoxin autotransporter (vacA) of Helicobacter pylori (Campylobacter pylori).